A 394-amino-acid chain; its full sequence is Obg-like ATPase 1 (394 aa).

An OBG-type G domain is found at 25 to 282 (LKIGIVGLPN…MPPDEAAKYC (258 aa)). Residues 34-39 (NVGKST), 56-60 (FCTID), and 94-97 (DIAG) each bind ATP. 34–39 (NVGKST) contributes to the GTP binding site. Mg(2+)-binding residues include Ser38 and Thr58. Residues Phe129 and Asn230 each coordinate GTP. Residues 230-231 (NM), Met231, and 263-265 (SCA) contribute to the ATP site. 263-265 (SCA) serves as a coordination point for GTP. Positions 303-386 (HLIYFFTAGP…QDGDIIFFKF (84 aa)) constitute a TGS domain.

It belongs to the TRAFAC class OBG-HflX-like GTPase superfamily. OBG GTPase family. YchF/OLA1 subfamily. As to quaternary structure, monomer (Potential). Interacts with GAP1. Mg(2+) is required as a cofactor.

The protein resides in the cell membrane. The protein localises to the cytoplasm. Its subcellular location is the cytosol. Its activity is regulated as follows. Activated by GAP1. Its function is as follows. Hydrolyzes ATP, and can also hydrolyze GTP with lower efficiency. Has lower affinity for GTP (Potential). Exhibits GTPase activity. Exhibits similar binding affinities and hydrolytic activities toward both GTP and ATP. Binds to the 26 S ribosomal RNA in vitro, but not to the 5.8 S or 18 S rRNA. Confers sensitivity to salinity stress by suppressing the anti-oxidation enzymatic activities and increasing lipid peroxidation thus leading to the accumulation of reactive oxygen species (ROS). In Oryza sativa subsp. japonica (Rice), this protein is Obg-like ATPase 1.